The following is a 155-amino-acid chain: Probable cyclic pyranopterin monophosphate synthase (155 aa).

Substrate-binding positions include 74-76 (MCH) and 110-111 (ME). D125 is a catalytic residue.

It belongs to the MoaC family. In terms of assembly, homohexamer; trimer of dimers.

It carries out the reaction (8S)-3',8-cyclo-7,8-dihydroguanosine 5'-triphosphate = cyclic pyranopterin phosphate + diphosphate. It participates in cofactor biosynthesis; molybdopterin biosynthesis. Catalyzes the conversion of (8S)-3',8-cyclo-7,8-dihydroguanosine 5'-triphosphate to cyclic pyranopterin monophosphate (cPMP). The protein is Probable cyclic pyranopterin monophosphate synthase of Methanoregula boonei (strain DSM 21154 / JCM 14090 / 6A8).